The sequence spans 315 residues: Ornithine carbamoyltransferase (315 aa).

Carbamoyl phosphate is bound by residues 53–56 (STRT), glutamine 80, arginine 104, and 131–134 (HPCQ). L-ornithine-binding positions include asparagine 163, aspartate 227, and 231–232 (SM). Carbamoyl phosphate-binding positions include 267–268 (CL) and arginine 295.

Belongs to the aspartate/ornithine carbamoyltransferase superfamily. OTCase family.

The protein localises to the cytoplasm. It catalyses the reaction carbamoyl phosphate + L-ornithine = L-citrulline + phosphate + H(+). It functions in the pathway amino-acid biosynthesis; L-arginine biosynthesis; L-arginine from L-ornithine and carbamoyl phosphate: step 1/3. Reversibly catalyzes the transfer of the carbamoyl group from carbamoyl phosphate (CP) to the N(epsilon) atom of ornithine (ORN) to produce L-citrulline. This chain is Ornithine carbamoyltransferase, found in Rhodococcus jostii (strain RHA1).